The following is a 325-amino-acid chain: Cytochrome c1, heme protein, mitochondrial (325 aa).

The transit peptide at 1-84 (MAAAAASLRR…AVALHSAVSA (84 aa)) directs the protein to the mitochondrion. Over 85–287 (SDLELHPPSY…SEPEHDHRKR (203 aa)) the chain is Mitochondrial intermembrane. The 102-residue stretch at 108-209 (TSIRRGFQVY…IVRARHGGED (102 aa)) folds into the Cytochrome c domain. Cysteine 121, cysteine 124, histidine 125, and methionine 244 together coordinate heme c. A helical membrane pass occupies residues 288–308 (MGLKMLLMMGLLLPLTYAMKR). The Mitochondrial matrix segment spans residues 309 to 325 (HKWSVLKSRKLAYRPPK).

It belongs to the cytochrome c family. Component of the ubiquinol-cytochrome c oxidoreductase (cytochrome b-c1 complex, complex III, CIII), a multisubunit enzyme composed of 11 subunits. The complex is composed of 3 respiratory subunits cytochrome b, cytochrome c1 and Rieske protein UQCRFS1, 2 core protein subunits UQCRC1/QCR1 and UQCRC2/QCR2, and 6 low-molecular weight protein subunits UQCRH/QCR6, UQCRB/QCR7, UQCRQ/QCR8, UQCR10/QCR9, UQCR11/QCR10 and subunit 9, the cleavage product of Rieske protein UQCRFS1. The complex exists as an obligatory dimer and forms supercomplexes (SCs) in the inner mitochondrial membrane with NADH-ubiquinone oxidoreductase (complex I, CI) and cytochrome c oxidase (complex IV, CIV), resulting in different assemblies (supercomplex SCI(1)III(2)IV(1) and megacomplex MCI(2)III(2)IV(2)). Interacts with FLVCR2; this interaction occurs in the absence of heme and is disrupted upon heme binding. Heme c serves as cofactor.

It is found in the mitochondrion inner membrane. The enzyme catalyses a quinol + 2 Fe(III)-[cytochrome c](out) = a quinone + 2 Fe(II)-[cytochrome c](out) + 2 H(+)(out). Its function is as follows. Component of the ubiquinol-cytochrome c oxidoreductase, a multisubunit transmembrane complex that is part of the mitochondrial electron transport chain which drives oxidative phosphorylation. The respiratory chain contains 3 multisubunit complexes succinate dehydrogenase (complex II, CII), ubiquinol-cytochrome c oxidoreductase (cytochrome b-c1 complex, complex III, CIII) and cytochrome c oxidase (complex IV, CIV), that cooperate to transfer electrons derived from NADH and succinate to molecular oxygen, creating an electrochemical gradient over the inner membrane that drives transmembrane transport and the ATP synthase. The cytochrome b-c1 complex catalyzes electron transfer from ubiquinol to cytochrome c, linking this redox reaction to translocation of protons across the mitochondrial inner membrane, with protons being carried across the membrane as hydrogens on the quinol. In the process called Q cycle, 2 protons are consumed from the matrix, 4 protons are released into the intermembrane space and 2 electrons are passed to cytochrome c. Cytochrome c1 is a catalytic core subunit containing a c-type heme. It transfers electrons from the [2Fe-2S] iron-sulfur cluster of the Rieske protein to cytochrome c. The protein is Cytochrome c1, heme protein, mitochondrial (Cyc1) of Mus musculus (Mouse).